The chain runs to 189 residues: Thymidine kinase (189 aa).

ATP-binding positions include 9-16 (GTMNSGKT) and 85-88 (DESQ). Catalysis depends on E86, which acts as the Proton acceptor. Zn(2+)-binding residues include C143, C146, C180, and H183.

The protein belongs to the thymidine kinase family. As to quaternary structure, homotetramer.

The protein resides in the cytoplasm. It catalyses the reaction thymidine + ATP = dTMP + ADP + H(+). This Streptococcus pyogenes serotype M1 protein is Thymidine kinase.